The primary structure comprises 1579 residues: MERVLADALLTQSREPGELLGALCGGEASAERAETLRLVLQRLEERGAGAGALAKAAHEVARDHLVPLLHASQGGGPARPRVLRAASAALRSCARLAGPELAVTLAEEALRELPSAPAVELLAAVAPCLRAPEDAPLLRRLGRASVELALAGDAPPAVGARLLPALAQSAEPALRAAWDALSSAGPGAEGSTGPELLVLSALAEKLLTNHERHGDLDARLCGRFWRTVQAGLGRAQDGLTRKRARYLLQRAVQVSAELAVDCSCSPQDTKGPSLFWWSEKRKDELLKFWENYILIMEILEGNQIHVIKPALPKLNRLFECAVSEENGCWLFHPSWHTCIYKRMFESENKILAKEGVIHFLELYDVKSLPYSPELSEFITGPLMDALSESCLYSRSPGQPLGSDSPLGLKLQKFLVTYTSLLPEETKSCFLLKLIQRMADRHWCAVPVLFLSRALASIPSCKALGGEGLLALRDVLQRTMITHQVLLRGAAQCYLLQTAMRLVDVEKVSLSDISAFLLSLRQEESLGRGTVLWTELCDWLRVNERYFKQSSLGGSDGQEASLNAYVKNLVQEFVKSPGWEKESSFMPDWLDARLTALMVLLAVDVEGLKTKFREKQRTQNVLRIFLDPLLDALGKLGTNAYMPLLRTDRCLQLLVRLLHSCVPRRPGAQDDEVSTALQGSIMSASESVSQFVLRRLTMNELQDVADLDRCQLYLTVLSELMSLQVKLGWKAGNPISRVLSPLKNACVRHLQEAEDRQEPTLSHQVQRVVSMAALAALCEAVDQYPVLQPDSPNAEPVDRFLSALPLNHVLQKPRSEEQSIGVCPLENGSVFEESLSSKGWGKVVAQYLHDQWVCLSFLLRKHHHLIPSTESDVLEGFLPTAETPVQALQAALDVLTVLPAGRILPVFRCMEVLVPKLLTSEETLCIESFDVAWKIISSLSNTQLTFWPNLKAFVHFVFDHEILTIAAKLKGQVYFKIKEIMCKMIEMSSIKSGVFNILIRHCCQSWLVAASGVSQGSFSSAKDYSELVLEACVFGTVFRRDQRLIQDVQTFIENLGQGCAANVIIENAKREDYYVRICAIKFLCLLDGSDVSHKLFLEALAIKLLDKDESASRSRTRYHENSLQHRVKNRVWQTLLVLFPAFDQNFLHGIIDKVFHAGFTNNQASIKYFIEWLIILILHKFPEFLPKFWACFSYGEEKIKASICTFLSVLSHLDIIVQNIPEKKLVLKQALTVALQWCLSHNFSVRLYALVALKKAWHLCKTLQFEECGAWTAVIECSLSQAESMHGAGNARKNWQRIQDHFFFSTFHPLKDYCLETIFYTLPRLSGVTGEEWIALDKFANFTDIPSNAGSQWYLSGTALGELSPGDWSQQDQGSTLGEADSQSEWADVQKKIIPWGQSALESDLELEFQDRAAKLGKSISRLIVVASLIDKPTNLGGLCRTCEVFGAAVLVVGSLQCVSDRQFQHLSVSAEQWLPLVEVRPSQLMNYLQQKKAEGYTVIGVEQTAQSSDLAQYRFPEKSLLLLGNEREGIPANLIQQLDVCVEIPQQGIIRSLNVHVSGALLIWEYTRQQLLGCAEPPS.

Position 1 is an N-acetylmethionine (Met1). S-adenosyl-L-homocysteine contacts are provided by Val1501, Gly1524, Ile1544, Gln1546, and Leu1553.

It belongs to the class IV-like SAM-binding methyltransferase superfamily. RNA methyltransferase TrmH family. As to quaternary structure, monomer and homodimer.

It catalyses the reaction guanosine(18) in tRNA + S-adenosyl-L-methionine = 2'-O-methylguanosine(18) in tRNA + S-adenosyl-L-homocysteine + H(+). Functionally, S-adenosyl-L-methionine-dependent 2'-O-ribose methyltransferase that catalyzes the formation of 2'-O-methylguanosine at position 18 (Gm18) in a subset of tRNA. Selectively mediates Gm18 methylation of tRNAGln-TTG/CTG and tRNASer-TGA/GCT. Gm18 modification can enhance the stability of modified tRNAs. This Mus musculus (Mouse) protein is tRNA (guanosine(18)-2'-O)-methyltransferase TARBP1.